Reading from the N-terminus, the 274-residue chain is MAAATSTMSLIPPITQQQRWHAADSLVVLASRRHDSRRRRRCRYVVPRARLFGPAIFEASKLKVLFLGVDEEKHQHPGKLPRTYTLTHSDVTARLTLAVSHTINRAQLQGWYNKLQRDEVVAEWKKVQGHMSLHVHCHISGGHVLLDLIAGLRYYIFRKELPVVLKAFVHGDGNLFSRHPELEEATVWVYFHSNLPRFNRVECWGPLRDAGAPPEEDDAVAAAAAEEVAAEQMPAAGEWPRRCPGQCDCCFPPYSLIPWPHQHDVAAADGQPQQ.

The transit peptide at 1-48 (MAAATSTMSLIPPITQQQRWHAADSLVVLASRRHDSRRRRRCRYVVPR) directs the protein to the chloroplast.

The protein belongs to the staygreen family.

Its subcellular location is the plastid. The protein resides in the chloroplast. Involved in the disassembling mechanism of the intact light-harvesting complex of photosystem II (LHCPII) in the thylakoid membranes. Required to trigger chlorophyll degradation during natural and dark-induced leaf senescence. This is Protein STAY-GREEN, chloroplastic (SGR) from Oryza sativa subsp. indica (Rice).